We begin with the raw amino-acid sequence, 940 residues long: Isoleucine--tRNA ligase (940 aa).

A 'HIGH' region motif is present at residues 58-68 (PYANGSIHIGH). Glutamate 564 contacts L-isoleucyl-5'-AMP. The 'KMSKS' region motif lies at 605–609 (KMSKS). ATP is bound at residue lysine 608. Cysteine 903, cysteine 906, cysteine 923, and cysteine 926 together coordinate Zn(2+).

Belongs to the class-I aminoacyl-tRNA synthetase family. IleS type 1 subfamily. In terms of assembly, monomer. Requires Zn(2+) as cofactor.

The protein localises to the cytoplasm. It carries out the reaction tRNA(Ile) + L-isoleucine + ATP = L-isoleucyl-tRNA(Ile) + AMP + diphosphate. Catalyzes the attachment of isoleucine to tRNA(Ile). As IleRS can inadvertently accommodate and process structurally similar amino acids such as valine, to avoid such errors it has two additional distinct tRNA(Ile)-dependent editing activities. One activity is designated as 'pretransfer' editing and involves the hydrolysis of activated Val-AMP. The other activity is designated 'posttransfer' editing and involves deacylation of mischarged Val-tRNA(Ile). The chain is Isoleucine--tRNA ligase from Shewanella putrefaciens (strain CN-32 / ATCC BAA-453).